We begin with the raw amino-acid sequence, 188 residues long: MGVDIRHNKDRKVRRKEPKSQDIYLRLLVKLYRFLARRTNSTFNQVVLKRLFMSRTNRPPLSLSRMIRKMKLPGRENKTAVVVGTITDDVRVQEVPKLKVCALRVSSRARSRILKAGGKILTFDQLALDSPKGCGTVLLSGPRKGREVYRHFGKAPGTPHSHTKPYVRSKGRKFERARGRRASRGYKN.

Lys-119 is covalently cross-linked (Glycyl lysine isopeptide (Lys-Gly) (interchain with G-Cter in SUMO2)). Ser-130 is modified (phosphoserine). The disordered stretch occupies residues 151-188 (HFGKAPGTPHSHTKPYVRSKGRKFERARGRRASRGYKN). Thr-158 carries the post-translational modification Phosphothreonine. Basic residues-rich tracts occupy residues 161-171 (SHTKPYVRSKG) and 178-188 (RGRRASRGYKN). A Glycyl lysine isopeptide (Lys-Gly) (interchain with G-Cter in SUMO2) cross-link involves residue Lys-164.

It belongs to the eukaryotic ribosomal protein eL18 family. As to quaternary structure, component of the large ribosomal subunit.

It is found in the cytoplasm. Its subcellular location is the cytosol. It localises to the rough endoplasmic reticulum. Its function is as follows. Component of the large ribosomal subunit. The ribosome is a large ribonucleoprotein complex responsible for the synthesis of proteins in the cell. The chain is Large ribosomal subunit protein eL18 (RPL18) from Canis lupus familiaris (Dog).